A 159-amino-acid polypeptide reads, in one-letter code: 2-C-methyl-D-erythritol 2,4-cyclodiphosphate synthase (159 aa).

A divalent metal cation is bound by residues D8 and H10. Residues 8–10 (DVH) and 34–35 (HS) each bind 4-CDP-2-C-methyl-D-erythritol 2-phosphate. Residue H42 coordinates a divalent metal cation. 4-CDP-2-C-methyl-D-erythritol 2-phosphate is bound by residues 56 to 58 (DIG), 61 to 65 (FPDTD), 100 to 106 (AQAPRML), 132 to 135 (TTTE), F139, and R142.

The protein belongs to the IspF family. Homotrimer. It depends on a divalent metal cation as a cofactor.

It carries out the reaction 4-CDP-2-C-methyl-D-erythritol 2-phosphate = 2-C-methyl-D-erythritol 2,4-cyclic diphosphate + CMP. The protein operates within isoprenoid biosynthesis; isopentenyl diphosphate biosynthesis via DXP pathway; isopentenyl diphosphate from 1-deoxy-D-xylulose 5-phosphate: step 4/6. Its function is as follows. Involved in the biosynthesis of isopentenyl diphosphate (IPP) and dimethylallyl diphosphate (DMAPP), two major building blocks of isoprenoid compounds. Catalyzes the conversion of 4-diphosphocytidyl-2-C-methyl-D-erythritol 2-phosphate (CDP-ME2P) to 2-C-methyl-D-erythritol 2,4-cyclodiphosphate (ME-CPP) with a corresponding release of cytidine 5-monophosphate (CMP). The sequence is that of 2-C-methyl-D-erythritol 2,4-cyclodiphosphate synthase from Escherichia coli O45:K1 (strain S88 / ExPEC).